An 80-amino-acid chain; its full sequence is Putative membrane protein insertion efficiency factor (80 aa).

The protein belongs to the UPF0161 family.

Its subcellular location is the cell inner membrane. Could be involved in insertion of integral membrane proteins into the membrane. This is Putative membrane protein insertion efficiency factor from Paracoccus denitrificans (strain Pd 1222).